We begin with the raw amino-acid sequence, 139 residues long: Immunogenic miracidial antigen 8I (139 aa).

The segment at 61–139 (IDVGDEDYHD…PKKYGSGYKH (79 aa)) is disordered. Acidic residues predominate over residues 64–85 (GDEDYHDGDDDVDYTDDVDDVD). The span at 90–103 (SPSQLLQGGYQRNQ) shows a compositional bias: polar residues.

The protein belongs to the immunogenic miracidial antigen family.

This chain is Immunogenic miracidial antigen 8I (8I), found in Schistosoma japonicum (Blood fluke).